A 173-amino-acid polypeptide reads, in one-letter code: Crossover junction endodeoxyribonuclease RuvC (173 aa).

Active-site residues include Asp-8, Glu-67, and Asp-139. The Mg(2+) site is built by Asp-8, Glu-67, and Asp-139.

It belongs to the RuvC family. In terms of assembly, homodimer which binds Holliday junction (HJ) DNA. The HJ becomes 2-fold symmetrical on binding to RuvC with unstacked arms; it has a different conformation from HJ DNA in complex with RuvA. In the full resolvosome a probable DNA-RuvA(4)-RuvB(12)-RuvC(2) complex forms which resolves the HJ. Mg(2+) serves as cofactor.

The protein localises to the cytoplasm. The catalysed reaction is Endonucleolytic cleavage at a junction such as a reciprocal single-stranded crossover between two homologous DNA duplexes (Holliday junction).. Functionally, the RuvA-RuvB-RuvC complex processes Holliday junction (HJ) DNA during genetic recombination and DNA repair. Endonuclease that resolves HJ intermediates. Cleaves cruciform DNA by making single-stranded nicks across the HJ at symmetrical positions within the homologous arms, yielding a 5'-phosphate and a 3'-hydroxyl group; requires a central core of homology in the junction. The consensus cleavage sequence is 5'-(A/T)TT(C/G)-3'. Cleavage occurs on the 3'-side of the TT dinucleotide at the point of strand exchange. HJ branch migration catalyzed by RuvA-RuvB allows RuvC to scan DNA until it finds its consensus sequence, where it cleaves and resolves the cruciform DNA. The polypeptide is Crossover junction endodeoxyribonuclease RuvC (Serratia proteamaculans (strain 568)).